We begin with the raw amino-acid sequence, 457 residues long: tRNA-2-methylthio-N(6)-dimethylallyladenosine synthase (457 aa).

In terms of domain architecture, MTTase N-terminal spans 3-120 (KKVYIKTFGC…LPQMIDQRRA (118 aa)). Cysteine 12, cysteine 49, cysteine 83, cysteine 157, cysteine 161, and cysteine 164 together coordinate [4Fe-4S] cluster. The 235-residue stretch at 143 to 377 (RVEGPSAFVS…QATIEENVAR (235 aa)) folds into the Radical SAM core domain. Residues 380-447 (RSMVGKVERI…PHSLRGELLL (68 aa)) enclose the TRAM domain.

Belongs to the methylthiotransferase family. MiaB subfamily. As to quaternary structure, monomer. It depends on [4Fe-4S] cluster as a cofactor.

The protein resides in the cytoplasm. The enzyme catalyses N(6)-dimethylallyladenosine(37) in tRNA + (sulfur carrier)-SH + AH2 + 2 S-adenosyl-L-methionine = 2-methylsulfanyl-N(6)-dimethylallyladenosine(37) in tRNA + (sulfur carrier)-H + 5'-deoxyadenosine + L-methionine + A + S-adenosyl-L-homocysteine + 2 H(+). In terms of biological role, catalyzes the methylthiolation of N6-(dimethylallyl)adenosine (i(6)A), leading to the formation of 2-methylthio-N6-(dimethylallyl)adenosine (ms(2)i(6)A) at position 37 in tRNAs that read codons beginning with uridine. The polypeptide is tRNA-2-methylthio-N(6)-dimethylallyladenosine synthase (Burkholderia ambifaria (strain MC40-6)).